Consider the following 77-residue polypeptide: Large ribosomal subunit protein bL28 (77 aa).

Belongs to the bacterial ribosomal protein bL28 family.

This Laribacter hongkongensis (strain HLHK9) protein is Large ribosomal subunit protein bL28.